Here is a 408-residue protein sequence, read N- to C-terminus: Two-pore potassium channel 5 (408 aa).

Disordered regions lie at residues methionine 1–isoleucine 29 and glutamine 58–arginine 82. A compositionally biased stretch (low complexity) spans proline 15–isoleucine 29. Over serine 22–serine 115 the chain is Stromal. Positions aspartate 63–aspartate 72 are enriched in acidic residues. The helical transmembrane segment at isoleucine 116–serine 136 threads the bilayer. The segment at residues aspartate 152–proline 171 is an intramembrane region (pore-forming). Residues isoleucine 178–valine 198 form a helical membrane-spanning segment. Topologically, residues valine 199 to valine 248 are stromal. The helical transmembrane segment at cysteine 249–valine 269 threads the bilayer. Residues aspartate 276 to phenylalanine 295 constitute an intramembrane region (pore-forming). The chain crosses the membrane as a helical span at residues leucine 302–leucine 322. Residues alanine 323–leucine 408 lie on the Stromal side of the membrane. EF-hand domains lie at leucine 339–lysine 374 and lysine 378–leucine 408. Ca(2+) is bound by residues aspartate 352, glutamate 363, aspartate 391, asparagine 393, lysine 397, and aspartate 402.

It belongs to the two pore domain potassium channel (TC 1.A.1.7) family. As to quaternary structure, homodimer. As to expression, expressed in hydathodes and the vascular tissues of roots, stems, leaves and flowers.

The protein resides in the vacuole membrane. Functionally, probable voltage-independent potassium-selective tonoplast ion channel. The chain is Two-pore potassium channel 5 (TPK5) from Arabidopsis thaliana (Mouse-ear cress).